We begin with the raw amino-acid sequence, 71 residues long: UPF0346 protein SUB0487 (71 aa).

It belongs to the UPF0346 family.

The protein is UPF0346 protein SUB0487 of Streptococcus uberis (strain ATCC BAA-854 / 0140J).